Here is a 513-residue protein sequence, read N- to C-terminus: Maturase K (513 aa).

It belongs to the intron maturase 2 family. MatK subfamily.

The protein localises to the plastid. It is found in the chloroplast. Usually encoded in the trnK tRNA gene intron. Probably assists in splicing its own and other chloroplast group II introns. The polypeptide is Maturase K (Cyrilla racemiflora (Swamp titi)).